Reading from the N-terminus, the 403-residue chain is Alkaline protease 1 (403 aa).

The N-terminal stretch at 1 to 21 (MLSIKRTLLLLGAVLPAVFGA) is a signal peptide. Residues 22 to 125 (PVQETRRAAQ…QIWYIDALTT (104 aa)) constitute a propeptide that is removed on maturation. Positions 36–120 (KYIVTFKPGT…HVEEDQIWYI (85 aa)) constitute an Inhibitor I9 domain. The Peptidase S8 domain occupies 130–403 (PWGLGSISHK…PNKLAYNGNA (274 aa)). Active-site charge relay system residues include aspartate 162 and histidine 193. Asparagine 253 and asparagine 307 each carry an N-linked (GlcNAc...) asparagine glycan. The active-site Charge relay system is the serine 349.

Belongs to the peptidase S8 family.

It is found in the secreted. It carries out the reaction Hydrolysis of proteins with broad specificity, and of Bz-Arg-OEt &gt; Ac-Tyr-OEt. Does not hydrolyze peptide amides.. Secreted alkaline protease that allows assimilation of proteinaceous substrates. This is Alkaline protease 1 (alp1) from Neosartorya fischeri (strain ATCC 1020 / DSM 3700 / CBS 544.65 / FGSC A1164 / JCM 1740 / NRRL 181 / WB 181) (Aspergillus fischerianus).